The primary structure comprises 325 residues: Chain length determinant protein (325 aa).

The Cytoplasmic segment spans residues methionine 1–lysine 31. Residues methionine 32–alanine 52 form a helical membrane-spanning segment. Residues lysine 53–lysine 294 are Periplasmic-facing. The helical transmembrane segment at alanine 295–glycine 315 threads the bilayer. Residues arginine 316 to lysine 325 lie on the Cytoplasmic side of the membrane.

Belongs to the WzzB/Cld/Rol family.

It localises to the cell inner membrane. The protein operates within bacterial outer membrane biogenesis; lipopolysaccharide biosynthesis. In terms of biological role, confers a modal distribution of chain length on the O-antigen component of lipopolysaccharide (LPS). Gives rise to a reduced number of short chain molecules and increases in numbers of longer molecules. The polypeptide is Chain length determinant protein (wzzB) (Shigella dysenteriae).